Consider the following 144-residue polypeptide: Large ribosomal subunit protein uL15 (144 aa).

Positions 1-59 (MELNNLKPAEGAKHAKRRVGRGIGSGLGKTAGRGHKGQKSRSGGFHKVGFEGGQMPLQR) are disordered. A compositionally biased stretch (gly residues) spans 21-31 (RGIGSGLGKTA).

This sequence belongs to the universal ribosomal protein uL15 family. In terms of assembly, part of the 50S ribosomal subunit.

Binds to the 23S rRNA. The sequence is that of Large ribosomal subunit protein uL15 from Burkholderia thailandensis (strain ATCC 700388 / DSM 13276 / CCUG 48851 / CIP 106301 / E264).